Reading from the N-terminus, the 306-residue chain is Porphobilinogen deaminase (306 aa).

Cys-239 bears the S-(dipyrrolylmethanemethyl)cysteine mark.

Belongs to the HMBS family. Monomer. It depends on dipyrromethane as a cofactor.

It carries out the reaction 4 porphobilinogen + H2O = hydroxymethylbilane + 4 NH4(+). The protein operates within porphyrin-containing compound metabolism; protoporphyrin-IX biosynthesis; coproporphyrinogen-III from 5-aminolevulinate: step 2/4. Functionally, tetrapolymerization of the monopyrrole PBG into the hydroxymethylbilane pre-uroporphyrinogen in several discrete steps. The polypeptide is Porphobilinogen deaminase (Helicobacter pylori (strain HPAG1)).